Here is a 234-residue protein sequence, read N- to C-terminus: Accessory gland protein Acp29AB (234 aa).

The first 21 residues, 1–21 (MYASNLLYLLALWNLWDLSGG), serve as a signal peptide directing secretion. N61 and N164 each carry an N-linked (GlcNAc...) asparagine glycan. Positions 137–234 (VTCRKMNGHL…SFVCQADQWA (98 aa)) constitute a C-type lectin domain. 2 cysteine pairs are disulfide-bonded: C139–C228 and C207–C220.

In terms of tissue distribution, main cells of the accessory gland and in seminal fluid.

The protein localises to the secreted. Functionally, responsible for physiological and behavioral changes in mated female flies. This is Accessory gland protein Acp29AB (Acp29AB) from Drosophila melanogaster (Fruit fly).